The following is a 90-amino-acid chain: Small ribosomal subunit protein bS16 (90 aa).

Belongs to the bacterial ribosomal protein bS16 family.

The chain is Small ribosomal subunit protein bS16 from Bacillus cytotoxicus (strain DSM 22905 / CIP 110041 / 391-98 / NVH 391-98).